The sequence spans 155 residues: Gas vesicle protein K (155 aa).

Belongs to the gas vesicle GvpK family.

The protein localises to the gas vesicle. Might be involved in nucleating gas vesicle formation. Gas vesicles (GV) are hollow, gas filled proteinaceous nanostructures. During planktonic growth they allow positioning of the organism at a favorable depth for light or nutrient acquisition. The polypeptide is Gas vesicle protein K (Dolichospermum flosaquae (Anabaena flos-aquae)).